The primary structure comprises 676 residues: Potassium voltage-gated channel subfamily KQT member 1 (676 aa).

Disordered stretches follow at residues 1-28 and 62-84; these read MAAASSPPRAERKRWGWGRLPGARRGSA and APPASPAAPAAPPVASDLGPRPP. The Cytoplasmic portion of the chain corresponds to 1 to 120; it reads MAAASSPPRA…YNFLERPTGW (120 aa). Position 27 is a phosphoserine; by PKA (Ser27). Over residues 62 to 73 the composition is skewed to pro residues; the sequence is APPASPAAPAAP. Residues 121–142 form a helical membrane-spanning segment; that stretch reads KCFVYHFAVFLIVLVCLIFSVL. Over 143-153 the chain is Extracellular; it reads STIEQYAALAT. The helical transmembrane segment at 154 to 176 threads the bilayer; the sequence is GTLFWMEIVLVVFFGTEYVVRLW. Topologically, residues 177–192 are cytoplasmic; that stretch reads SAGCRSKYVGLWGRLR. The chain crosses the membrane as a helical span at residues 193 to 218; that stretch reads FARKPISIIDLIVVVASMVVLCVGSK. The Extracellular segment spans residues 219–226; sequence GQVFATSA. The helical; Voltage-sensor transmembrane segment at 227 to 242 threads the bilayer; sequence IRGIRFLQILRMLHVD. The interaction with KCNE3 stretch occupies residues 238–246; it reads MLHVDRQGG. Residues 243–260 lie on the Cytoplasmic side of the membrane; sequence RQGGTWRLLGSVVFIHRQ. Gln244 is a binding site for a 1,2-diacyl-sn-glycero-3-phospho-(1D-myo-inositol-4,5-bisphosphate). A helical membrane pass occupies residues 261-283; sequence ELITTLYIGFLGLIFSSYFVYLA. Residues 284–299 are Extracellular-facing; the sequence is EKDAVNESGRVEFGSY. Asn289 is a glycosylation site (N-linked (GlcNAc...) asparagine). Residues 300–320 constitute an intramembrane region (pore-forming); it reads ADALWWGVVTVTTIGYGDKVP. Over 321–322 the chain is Extracellular; the sequence is QT. The chain crosses the membrane as a helical span at residues 323 to 348; it reads WVGKTIASCFSVFAISFFALPAGILG. Residues 349-676 lie on the Cytoplasmic side of the membrane; the sequence is SGFALKVQQK…VPRRGPDEGS (328 aa). Positions 370–382 are interaction with CALM; it reads AAASLIQTAWRCY. Residues Ser407 and Ser409 each carry the phosphoserine modification. The interaction with CALM; calcium-dependent stretch occupies residues 515-529; the sequence is KVIRRMQYFVAKKKF. An interaction with KCNE1 C-terminus region spans residues 535-572; sequence PYDVRDVIEQYSQGHLNLMVRIKELQRRLDQSIGKPSL. A coiled-coil region spans residues 585–621; the sequence is SNTIGARLNRVEDKVTQLDQRLALITDMLHQLLSLHG. The segment at 588-616 is interaction with AKAP9; it reads IGARLNRVEDKVTQLDQRLALITDMLHQL. The segment at 589-620 is C-terminal assembly domain (tetramerization); it reads GARLNRVEDKVTQLDQRLALITDMLHQLLSLH. The tract at residues 620–676 is disordered; it reads HGGSTPGSGGPPREGGAHITQPCGSGGSVDPELFLPSNTLPTYEQLTVPRRGPDEGS. The segment covering 623–632 has biased composition (gly residues); that stretch reads STPGSGGPPR. A compositionally biased stretch (polar residues) spans 655–664; it reads PSNTLPTYEQ.

Belongs to the potassium channel family. KQT (TC 1.A.1.15) subfamily. Kv7.1/KCNQ1 sub-subfamily. As to quaternary structure, tetramer. Heterotetramer with KCNE1; targets to the membrane raft. Interacts (via C-terminus) with calmodulin; forms a heterooctameric structure (with 4:4 KCNQ1:CALM stoichiometry); the interaction is calcium-independent, constitutive, participates in the proper assembly of a functional channel and also acts a calcium sensor. KCNQ1 channels interact more strongly with Ca(2+)-CALM than with apoCALM. Interacts with AKAP9; targets protein kinase A (PKA) catalytic and regulatory subunits and protein phosphatase 1 (PP1) to the KCNQ1-KCNE1 complex, allowing PKA-mediated phosphorylation and increase of delayed rectifier potassium channel activity. Interacts with KCNE2; forms a heterooligomer complex that targets to the membrane raft and leading to currents with an apparently instantaneous activation, a rapid deactivation process and a linear current-voltage relationship and decreases the amplitude of the outward current. Interacts with AP2M1; mediates estrogen-induced internalization via clathrin-coated vesicles. Interacts with NEDD4L; promotes internalization and decreases I(Ks) currents. Interacts with USP2; counteracts the NEDD4L-specific down-regulation of I(Ks) and restore plasma membrane localization. Heterotetramer with KCNQ5; has a voltage-gated potassium channel activity. Interacts with KCNE3; four KCNE3 molecules are bound to one KCNQ1 tetramer (4:4 KCNQ1:KCNE3 stoichiometry); alters membrane raft localization; affects KCNQ1 structure and gating properties. Interacts with KCNE4; impairs KCNQ1 localization in lipid rafts and inhibits voltage-gated potassium channel activity. Interacts with KCNE5; impairs KCNQ1 localization in lipid rafts and only conducts current upon strong and continued depolarization. Interacts with SLC5A3; forms coregulatory channel-transporter complexes that modulate Na(+)-coupled myo-inositol influx through the transporter. Post-translationally, phosphorylation at Ser-27 by PKA; increases delayed rectifier potassium channel activity of the KCNQ1-KCNE1 complex through a macromolecular complex that includes PKA, PP1, and the targeting protein AKAP9. Ubiquitinated by NEDD4L; promotes internalization. The ubiquitinylated form is internalized through a clathrin-mediated endocytosis by interacting with AP2M1 and is recycled back to the cell membrane via RAB4A and RAB11A. In terms of processing, deubiquitinated by USP2; counteracts the NEDD4L-specific down-regulation of I(Ks) and restores the membrane localization. As to expression, abundantly expressed in heart, pancreas, prostate, kidney, small intestine and peripheral blood leukocytes. Less abundant in placenta, lung, spleen, colon, thymus, testis and ovaries.

It localises to the cell membrane. Its subcellular location is the cytoplasmic vesicle membrane. The protein localises to the early endosome. The protein resides in the membrane raft. It is found in the endoplasmic reticulum. It localises to the basolateral cell membrane. Its subcellular location is the apical cell membrane. It carries out the reaction K(+)(in) = K(+)(out). With respect to regulation, PIP2 molecule is essential to activate KCNQ channels by inducing the coupling of the voltage-sensing domain (VSD) and the pore-forming domain (PD). Upon channel activation, PIP2 disrupts the VSD-calmodulin/CALM interactions, causing the release of CALM from the VSD which triggers the opening of the gate. Calcium potentiates KCNQ1 channel current through calcium-bound CALM. Calcium-bound CALM competes with PIP2 to stabilize the channel open state. Functionally, pore-forming subunit of the voltage-gated potassium (Kv) channel involved in the regulation of cardiomyocyte excitability and important in normal development and functions of myocardium, inner ear, stomach and colon. Associates with KCNE beta subunits that modulates current kinetics. Induces a voltage-dependent current by rapidly activating and slowly deactivating potassium-selective outward current. Also promotes a delayed voltage activated potassium current showing outward rectification characteristic. During beta-adrenergic receptor stimulation, participates in cardiac repolarization by associating with KCNE1 to form the I(Ks) cardiac potassium current that increases the amplitude and slows down the activation kinetics of outward potassium current I(Ks). Muscarinic agonist oxotremorine-M strongly suppresses KCNQ1/KCNE1 current. When associated with KCNE3, forms the potassium channel that is important for cyclic AMP-stimulated intestinal secretion of chloride ions. This interaction with KCNE3 is reduced by 17beta-estradiol, resulting in the reduction of currents. During conditions of increased substrate load, maintains the driving force for proximal tubular and intestinal sodium ions absorption, gastric acid secretion, and cAMP-induced jejunal chloride ions secretion. Allows the provision of potassium ions to the luminal membrane of the secretory canaliculus in the resting state as well as during stimulated acid secretion. When associated with KCNE2, forms a heterooligomer complex leading to currents with an apparently instantaneous activation, a rapid deactivation process and a linear current-voltage relationship and decreases the amplitude of the outward current. When associated with KCNE4, inhibits voltage-gated potassium channel activity. When associated with KCNE5, this complex only conducts current upon strong and continued depolarization. Also forms a heterotetramer with KCNQ5; has a voltage-gated potassium channel activity. Binds with phosphatidylinositol 4,5-bisphosphate. KCNQ1-KCNE2 channel associates with Na(+)-coupled myo-inositol symporter in the apical membrane of choroid plexus epithelium and regulates the myo-inositol gradient between blood and cerebrospinal fluid with an impact on neuron excitability. Its function is as follows. Non-functional alone but modulatory when coexpressed with the full-length isoform 1. The sequence is that of Potassium voltage-gated channel subfamily KQT member 1 from Homo sapiens (Human).